Consider the following 133-residue polypeptide: UPF0134 protein MPN_151 (133 aa).

This sequence belongs to the UPF0134 family.

This Mycoplasma pneumoniae (strain ATCC 29342 / M129 / Subtype 1) (Mycoplasmoides pneumoniae) protein is UPF0134 protein MPN_151.